We begin with the raw amino-acid sequence, 317 residues long: CXXC-type zinc finger protein 5 (317 aa).

Gly residues predominate over residues 1 to 10; the sequence is MSSLGGGSQD. The disordered stretch occupies residues 1–92; sequence MSSLGGGSQD…SFGSSGGGGS (92 aa). 2 stretches are compositionally biased toward low complexity: residues 11–27 and 36–51; these read AGGSSSSSNTNSSSGSG and STAVAATTAPTSVADD. A CXXC-type zinc finger spans residues 251–292; the sequence is GKKKRKRCGMCAPCRRRINCEQCSSCRNRKTGHQICKFRKCE. The short motif at 252–257 is the Nuclear localization signal element; sequence KKKRKR. Positions 258, 261, 264, 270, 273, 276, 286, and 291 each coordinate Zn(2+).

As to quaternary structure, interacts with DVL1. Interacts with RBPJ.

It is found in the nucleus. The protein resides in the cytoplasm. May indirectly participate in activation of the NF-kappa-B and MAPK pathways. Acts as a mediator of BMP4-mediated modulation of canonical Wnt signaling activity in neural stem cells. Required for DNA damage-induced ATM phosphorylation, p53 activation and cell cycle arrest. Involved in myelopoiesis. Binds to the oxygen responsive element of COX4I2 and represses its transcription under hypoxia conditions (4% oxygen), as well as normoxia conditions (20% oxygen). May repress COX4I2 transactivation induced by CHCHD2 and RBPJ. Binds preferentially to DNA containing cytidine-phosphate-guanosine (CpG) dinucleotides over CpH (H=A, T, and C), hemimethylated-CpG and hemimethylated-hydroxymethyl-CpG. In Mus musculus (Mouse), this protein is CXXC-type zinc finger protein 5 (Cxxc5).